The primary structure comprises 301 residues: Probable alpha-L-glutamate ligase (301 aa).

Positions 104–287 (LQLLARKGIG…VAGQLIDYIE (184 aa)) constitute an ATP-grasp domain. ATP is bound by residues Lys-141, 178–179 (EF), Asp-187, and 211–213 (RSN). 3 residues coordinate Mg(2+): Asp-248, Glu-260, and Asn-262. Positions 248, 260, and 262 each coordinate Mn(2+).

The protein belongs to the RimK family. Mg(2+) serves as cofactor. The cofactor is Mn(2+).

This Maridesulfovibrio salexigens (strain ATCC 14822 / DSM 2638 / NCIMB 8403 / VKM B-1763) (Desulfovibrio salexigens) protein is Probable alpha-L-glutamate ligase.